The chain runs to 266 residues: MDSLLNSITIDPAERRKTQNRLAKRKSRIHAGKQQGAMEAANALVGRQPTSVFTSTQQTIKGITSMNGSAEPPNGAVRLIQTASPLNEAAEDYSHTTSASSSSTMGTSLQTWHSHVSSDEITYTGQDMNLYPSSIFTNLSPGSSSSLSMQDSNVILCSPMTSPMTRHVMPSCSKDNYGVQRSKPGSPLHIASAMGHLKVVKTLITYGANVNEVDAAGYSPIHYATRNNHTAIVALLLEKGADWSYNVRSIDTSSGLAEALIHIIET.

The interval 17–36 is disordered; it reads KTQNRLAKRKSRIHAGKQQG. Residues 18 to 31 are compositionally biased toward basic residues; sequence TQNRLAKRKSRIHA. ANK repeat units lie at residues 183-212 and 216-245; these read KPGSPLHIASAMGHLKVVKTLITYGANVNE and AGYSPIHYATRNNHTAIVALLLEKGADWSY.

Its subcellular location is the nucleus. Its function is as follows. Transcription regulator; part of the Fg3_54/C64 gene cluster that mediates the biosynthesis of the octapeptide fusaoctaxin A, a virulence factor that is required for cell-to-cell invasiveness of plant host. Positively regulates the expression the Fg3_54/C64 gene cluster. The protein is Transcription regulator FGM4 of Gibberella zeae (strain ATCC MYA-4620 / CBS 123657 / FGSC 9075 / NRRL 31084 / PH-1) (Wheat head blight fungus).